A 198-amino-acid chain; its full sequence is Putative coiled-coil domain-containing protein 196 (198 aa).

Residues 24-117 are a coiled coil; it reads NYLKELNEDL…RKEMEMLWNK (94 aa). 2 stretches are compositionally biased toward basic and acidic residues: residues 135–144 and 154–167; these read NKTDLQDGKA and TKNELETLCAEKGK. The interval 135 to 198 is disordered; the sequence is NKTDLQDGKA…VSGTSQHHSE (64 aa). A compositionally biased stretch (polar residues) spans 187 to 198; it reads GQVSGTSQHHSE.

This is Putative coiled-coil domain-containing protein 196 from Bos taurus (Bovine).